Reading from the N-terminus, the 319-residue chain is MNPNYLDFEQPIADLEAKIQELRNASAGPAVNVEAEVHALQDKLRLRTAQIFRNLTSWQVLQLARHPSRPYTADYLRVMFDEFQELAGDRAFADDKAIMGGLARINGRSVMVIGHQKGRDTKEKIKRNFGMPKPEGYRKALRLMKMAERFGLPVLTLIDTAGAWPGIDAESRGQSEAIARNLIEMAELKVPIICTVIGEGGSGGALALGVGDRTVMLEYAVYSTITPEGCASILWKDAGKAKDAAEQLGLTAPRLKSLGLVDKVVREPTGGAHRNPTQMAKRLKAVLLNELDALEKLSTEQLLEQRYTRLRSYGTYEAA.

The CoA carboxyltransferase C-terminal domain occupies 38–293 (HALQDKLRLR…KAVLLNELDA (256 aa)).

Belongs to the AccA family. Acetyl-CoA carboxylase is a heterohexamer composed of biotin carboxyl carrier protein (AccB), biotin carboxylase (AccC) and two subunits each of ACCase subunit alpha (AccA) and ACCase subunit beta (AccD).

It is found in the cytoplasm. It catalyses the reaction N(6)-carboxybiotinyl-L-lysyl-[protein] + acetyl-CoA = N(6)-biotinyl-L-lysyl-[protein] + malonyl-CoA. It participates in lipid metabolism; malonyl-CoA biosynthesis; malonyl-CoA from acetyl-CoA: step 1/1. Functionally, component of the acetyl coenzyme A carboxylase (ACC) complex. First, biotin carboxylase catalyzes the carboxylation of biotin on its carrier protein (BCCP) and then the CO(2) group is transferred by the carboxyltransferase to acetyl-CoA to form malonyl-CoA. This chain is Acetyl-coenzyme A carboxylase carboxyl transferase subunit alpha, found in Stenotrophomonas maltophilia (strain R551-3).